The sequence spans 226 residues: MASTDEPGVGSGDPTARARQAEAIVNHAEHSISEDAIVAAARERAVDIGAGAVSPAVGALLCVLAKLTGARAVVEVGTGAGVSGLWLLSGMREDGVLTTIDVEPEHQRIAKQAFSEAGVGPGRTRLISGRAQEVLTRLADESYDLVFIDAAPADQPHFVTEGVRLLRPGGAIVVHRAALGGRAGDATAKDSEVAAVREAARLIAEDDRLTPVLIPLGDGLLAAARD.

S-adenosyl-L-methionine is bound by residues Val53, Glu75, 77–78 (GT), Ser83, Asp101, and Val102. Position 149 (Asp149) interacts with substrate.

It belongs to the class I-like SAM-binding methyltransferase superfamily. Cation-dependent O-methyltransferase family.

This is Putative O-methyltransferase Mvan_4497 from Mycolicibacterium vanbaalenii (strain DSM 7251 / JCM 13017 / BCRC 16820 / KCTC 9966 / NRRL B-24157 / PYR-1) (Mycobacterium vanbaalenii).